The following is a 427-amino-acid chain: Endothelin-1 receptor (427 aa).

A signal peptide spans 1 to 20 (METLCLRASFWLALVGCVIS). Over 21-80 (DNPERYSTNLSNHVDDFTTFRGTELSFLVTTHQPTNLVLPSNGSMHNYCPQQTKITSAFK) the chain is Extracellular. N-linked (GlcNAc...) asparagine glycans are attached at residues Asn29 and Asn62. Residues 81–102 (YINTVISCTIFIVGMVGNATLL) form a helical membrane-spanning segment. Residues 103–112 (RIIYQNKCMR) are Cytoplasmic-facing. The helical transmembrane segment at 113–132 (NGPNALIASLALGDLIYVVI) threads the bilayer. Residues 133–159 (DLPINVFKLLAGRWPFDHNDFGVFLCK) lie on the Extracellular side of the membrane. The cysteines at positions 158 and 239 are disulfide-linked. A helical transmembrane segment spans residues 160 to 181 (LFPFLQKSSVGITVLNLCALSV). The Cytoplasmic segment spans residues 182–205 (DRYRAVASWSRVQGIGIPLVTAIE). Residues 206–229 (IVSIWILSFILAIPEAIGFVMVPF) form a helical membrane-spanning segment. Topologically, residues 230-256 (EYRGEQHKTCMLNATSKFMEFYQDVKD) are extracellular. A helical transmembrane segment spans residues 257–278 (WWLFGFYFCMPLVCTAIFYTLM). The Cytoplasmic segment spans residues 279-306 (TCEMLNRRNGSLRIALSEHLKQRREVAK). A helical transmembrane segment spans residues 307 to 328 (TVFCLVVIFALCWFPLHLSRIL). At 329-347 (KKTVYNEMDKNRCELLSFL) the chain is on the extracellular side. A helical membrane pass occupies residues 348-372 (LLMDYIGINLATMNSCINPIALYFV). The Cytoplasmic portion of the chain corresponds to 373 to 427 (SKKFKNCFQSCLCCCCYQSKSLMTSVPMNGTSIQWKNHDQNNHNTDRSSHKDSMN). The disordered stretch occupies residues 406-427 (QWKNHDQNNHNTDRSSHKDSMN). The segment covering 408 to 427 (KNHDQNNHNTDRSSHKDSMN) has biased composition (basic and acidic residues). Phosphoserine is present on Ser425.

It belongs to the G-protein coupled receptor 1 family. Endothelin receptor subfamily. EDNRA sub-subfamily. Interacts with HDAC7 and KAT5. As to expression, isoform 1, isoform 3 and isoform 4 are expressed in a variety of tissues, with highest levels in the aorta and cerebellum, followed by lung, atrium and cerebral cortex, lower levels in the placenta, kidney, adrenal gland, duodenum, colon, ventricle and liver but no expression in umbilical vein endothelial cells. Within the placenta, isoform 1, isoform 2, isoform 3 and isoform 4 are expressed in the villi and stem villi vessels.

The protein localises to the cell membrane. In terms of biological role, receptor for endothelin-1. Mediates its action by association with G proteins that activate a phosphatidylinositol-calcium second messenger system. The rank order of binding affinities for ET-A is: ET1 &gt; ET2 &gt;&gt; ET3. The polypeptide is Endothelin-1 receptor (Homo sapiens (Human)).